We begin with the raw amino-acid sequence, 262 residues long: UPF0758 protein R01728 (262 aa).

The tract at residues 23 to 44 is disordered; that stretch reads PEKRTRNSPATAPAPATDTHYH. The span at 31–40 shows a compositional bias: low complexity; sequence PATAPAPATD. One can recognise an MPN domain in the interval 140–262; that stretch reads VLSSWSAVID…HVSLKGLRLF (123 aa). Residues His-211, His-213, and Asp-224 each coordinate Zn(2+). Positions 211–224 match the JAMM motif motif; that stretch reads HNHPSGDPTPSRAD.

The protein belongs to the UPF0758 family.

The chain is UPF0758 protein R01728 from Rhizobium meliloti (strain 1021) (Ensifer meliloti).